A 1104-amino-acid chain; its full sequence is Partner and localizer of BRCA2 (1104 aa).

Positions 1 to 157 (MEELSGKPLS…WEKSSVSQEK (157 aa)) are required for its oligomerization and is important for its focal concentration at DNA damage sites. Residues 1–195 (MEELSGKPLS…TPVSEKTHLL (195 aa)) are interaction with RAD51. Positions 1-308 (MEELSGKPLS…RAHGQLPGSP (308 aa)) are interaction with BRCA1. The stretch at 9–48 (LSYAEKEKLKEKLAFLKKEYSRTLARLQRAKRAEKAKNSK) forms a coiled coil. Positions 39 to 52 (KRAEKAKNSKKAIE) are enriched in basic and acidic residues. 3 disordered regions span residues 39 to 91 (KRAE…TGEN), 122 to 157 (GQLLHSTSSPDGKKEQNTLPGTTKTPWEKSSVSQEK), and 243 to 272 (PSCTASNSNHSQHLEHTPPKSGCKITTQGP). Composition is skewed to polar residues over residues 59 to 70 (EASSQLSHSESI) and 138 to 154 (NTLPGTTKTPWEKSSVS). Phosphoserine is present on serine 274. A disordered region spans residues 304–354 (LPGSPNSCSVNDLTHSNLPANSTPNSKSLKSPSNTVDERNEPLQEDEILGP). The span at 306 to 338 (GSPNSCSVNDLTHSNLPANSTPNSKSLKSPSNT) shows a compositional bias: polar residues. Serine 364 bears the Phosphoserine mark. A chAM (Chromatin-association motif); required for chromatin association, mediates nucleosome association region spans residues 374 to 424 (SCTMLEGLLFPAEYYVRTTRRMSDCQRKIALEAVIQSHLGVKKKELKKKTK). 2 disordered regions span residues 417–494 (KELK…SART) and 581–730 (LQRD…TPLP). Serine 432 carries the post-translational modification Phosphoserine. Low complexity predominate over residues 446–462 (TSTGQSSSGSLSQKLLS). Residues 483-492 (RGHRGKRKSA) are compositionally biased toward basic residues. The span at 664 to 713 (TLSTEAAQPCSTSQPPLLGDTNSLVNNSKQCNSSACSPKPDTNLQASGRQ) shows a compositional bias: polar residues. Residues 693 to 1104 (QCNSSACSPK…DGNIFIYRYF (412 aa)) form a required for interaction with POLH and POLH DNA synthesis stimulation region. Residues 771 to 1104 (GNLQLVSELK…DGNIFIYRYF (334 aa)) form an interaction with RAD51 and BRCA2 region. The interval 771–1104 (GNLQLVSELK…DGNIFIYRYF (334 aa)) is interaction with RAD51, BRCA2 and POLH. 7 WD repeats span residues 772–833 (NLQL…WHFT), 835–879 (VPVL…QVLL), 880–927 (KSGD…LMPP), 928–970 (DETV…MHID), 976–1027 (SVCH…LLCS), 1033–1071 (AGRFLEGDVKDHVAAAVLTSGTIAIWDLLLGHCTALLPP), and 1073–1104 (SDQSWSLVKWSGTDSHLLAGQKDGNIFIYRYF).

As to quaternary structure, homooligomer; dissociated upon DNA damage thus allowing association with BRCA1. Oligomerization is essential for its focal accumulation at DNA breaks. Part of a BRCA complex containing BRCA1, BRCA2 and PALB2. Interacts with BRCA1 and this interaction is essential for its function in HRR. Interacts with RAD51AP1 and MORF4L1/MRG15. Component of the homologous recombination repair (HR) complex composed of ERCC5/XPG, BRCA2, PALB2, DSS1 and RAD51. Within the complex, interacts with ERCC5/XPG and BRCA2. Interacts with BRCA2, RAD51C, RAD51 and XRCC3; the interactions are direct and it may serve as a scaffold for a HR complex containing PALB2, BRCA2, RAD51C, RAD51 and XRCC3. Interacts with POLH; the interaction is direct.

The protein localises to the nucleus. In terms of biological role, plays a critical role in homologous recombination repair (HRR) through its ability to recruit BRCA2 and RAD51 to DNA breaks. Strongly stimulates the DNA strand-invasion activity of RAD51, stabilizes the nucleoprotein filament against a disruptive BRC3-BRC4 polypeptide and helps RAD51 to overcome the suppressive effect of replication protein A (RPA). Functionally cooperates with RAD51AP1 in promoting of D-loop formation by RAD51. Serves as the molecular scaffold in the formation of the BRCA1-PALB2-BRCA2 complex which is essential for homologous recombination. Via its WD repeats is proposed to scaffold a HR complex containing RAD51C and BRCA2 which is thought to play a role in HR-mediated DNA repair. Essential partner of BRCA2 that promotes the localization and stability of BRCA2. Also enables its recombinational repair and checkpoint functions of BRCA2. May act by promoting stable association of BRCA2 with nuclear structures, allowing BRCA2 to escape the effects of proteasome-mediated degradation. Binds DNA with high affinity for D loop, which comprises single-stranded, double-stranded and branched DNA structures. May play a role in the extension step after strand invasion at replication-dependent DNA double-strand breaks; together with BRCA2 is involved in both POLH localization at collapsed replication forks and DNA polymerization activity. In Mus musculus (Mouse), this protein is Partner and localizer of BRCA2 (Palb2).